Reading from the N-terminus, the 317-residue chain is Ribosomal RNA large subunit methyltransferase F (317 aa).

The protein belongs to the methyltransferase superfamily. METTL16/RlmF family.

It is found in the cytoplasm. It catalyses the reaction adenosine(1618) in 23S rRNA + S-adenosyl-L-methionine = N(6)-methyladenosine(1618) in 23S rRNA + S-adenosyl-L-homocysteine + H(+). Its function is as follows. Specifically methylates the adenine in position 1618 of 23S rRNA. This chain is Ribosomal RNA large subunit methyltransferase F, found in Pseudomonas putida (strain ATCC 700007 / DSM 6899 / JCM 31910 / BCRC 17059 / LMG 24140 / F1).